The chain runs to 555 residues: 2-isopropylmalate synthase (555 aa).

The region spanning 30-303 is the Pyruvate carboxyltransferase domain; that stretch reads PIWCSVDLRD…DPGLDCTDIN (274 aa). Residues Asp-39, His-242, His-244, and Asn-278 each coordinate Mg(2+). Residues 437–555 form a regulatory domain region; sequence QPDARIKFVD…VSAANRVIAK (119 aa).

The protein belongs to the alpha-IPM synthase/homocitrate synthase family. LeuA type 2 subfamily. As to quaternary structure, homodimer. Requires Mg(2+) as cofactor.

The protein localises to the cytoplasm. It carries out the reaction 3-methyl-2-oxobutanoate + acetyl-CoA + H2O = (2S)-2-isopropylmalate + CoA + H(+). It participates in amino-acid biosynthesis; L-leucine biosynthesis; L-leucine from 3-methyl-2-oxobutanoate: step 1/4. In terms of biological role, catalyzes the condensation of the acetyl group of acetyl-CoA with 3-methyl-2-oxobutanoate (2-ketoisovalerate) to form 3-carboxy-3-hydroxy-4-methylpentanoate (2-isopropylmalate). The polypeptide is 2-isopropylmalate synthase (Brucella melitensis biotype 1 (strain ATCC 23456 / CCUG 17765 / NCTC 10094 / 16M)).